We begin with the raw amino-acid sequence, 475 residues long: Lipid II flippase MurJ (475 aa).

Over 1–2 the chain is Cytoplasmic; that stretch reads MS. A helical transmembrane segment spans residues 3-23; the sequence is ILFSSILFSIATFFSRILGLF. The Periplasmic segment spans residues 24 to 35; the sequence is RDVLFAKYFGVS. A helical membrane pass occupies residues 36-56; the sequence is YELDAYFIAIMFPFFLRKVFG. Residues 57–78 are Cytoplasmic-facing; it reads EGAMSSAFVPLYSEKSGEEKDK. Residues 79-99 traverse the membrane as a helical segment; the sequence is FLSSVINGFSLIILALVILSY. Residues 100 to 123 are Periplasmic-facing; it reads FFPELIINLFGAGSSHETKILAKK. The helical transmembrane segment at 124 to 144 threads the bilayer; the sequence is LLLITSPSIYFIFLWAISYSI. The Cytoplasmic segment spans residues 145 to 150; the sequence is LNTNNK. A helical transmembrane segment spans residues 151–171; it reads FFWPALTPSISNITIIIGTFL. Residues 172-175 lie on the Periplasmic side of the membrane; it reads STKY. The helical transmembrane segment at 176 to 196 threads the bilayer; that stretch reads GIISPTIGFLIGSILMFFSII. The Cytoplasmic segment spans residues 197-213; sequence KSIIKHKYYFTIKHFPH. A helical membrane pass occupies residues 214 to 238; that stretch reads FLKLFFPTFMTMVVSQINTVVDMNV. Over 239–249 the chain is Periplasmic; the sequence is VSFYDKGSISY. Residues 250 to 271 traverse the membrane as a helical segment; it reads LQYASRFYLLPYGLFAVSVSTV. Residues 272-287 lie on the Cytoplasmic side of the membrane; the sequence is VLSKISNDRKNFNYHL. A helical membrane pass occupies residues 288–308; sequence NDALKTTLFFTIPSMVGLIFL. Over 309 to 332 the chain is Periplasmic; the sequence is STPIIRFFYEHGAFTSKDTLITSK. A helical membrane pass occupies residues 333–353; the sequence is ILIAYTLGLPFYGIYSTISRS. The Cytoplasmic segment spans residues 354–362; sequence YHAIKNTKT. The helical transmembrane segment at 363–383 threads the bilayer; the sequence is PFIAATIVSLSNIILDIIFGL. Topologically, residues 384–386 are periplasmic; it reads KYG. A helical transmembrane segment spans residues 387–407; it reads PIGVALATSIAGIIGVLYLLF. Residues 408-416 lie on the Cytoplasmic side of the membrane; sequence SVKTFPIKD. A helical transmembrane segment spans residues 417–437; that stretch reads FLKISLNSLIMLFVIYLTDFT. Topologically, residues 438–440 are periplasmic; the sequence is DNE. The chain crosses the membrane as a helical span at residues 441–461; sequence FWFLIQILIGILVYLIFSSIF. The Cytoplasmic segment spans residues 462 to 475; that stretch reads YRDLIRRFLYARKK.

Belongs to the MurJ/MviN family.

It localises to the cell inner membrane. It functions in the pathway cell wall biogenesis; peptidoglycan biosynthesis. Functionally, involved in peptidoglycan biosynthesis. Transports lipid-linked peptidoglycan precursors from the inner to the outer leaflet of the cytoplasmic membrane. The polypeptide is Lipid II flippase MurJ (Thermosipho africanus (strain TCF52B)).